The following is a 68-amino-acid chain: uncharacterized protein (68 aa).

This is an uncharacterized protein from Archaeoglobus fulgidus (strain ATCC 49558 / DSM 4304 / JCM 9628 / NBRC 100126 / VC-16).